The following is a 114-amino-acid chain: Small ribosomal subunit protein bS6 (114 aa).

This sequence belongs to the bacterial ribosomal protein bS6 family.

Functionally, binds together with bS18 to 16S ribosomal RNA. In Hydrogenovibrio crunogenus (strain DSM 25203 / XCL-2) (Thiomicrospira crunogena), this protein is Small ribosomal subunit protein bS6.